We begin with the raw amino-acid sequence, 263 residues long: Glutamate racemase (263 aa).

Substrate contacts are provided by residues 13–14 (DS) and 45–46 (YG). The Proton donor/acceptor role is filled by cysteine 77. 78–79 (NT) serves as a coordination point for substrate. Cysteine 185 acts as the Proton donor/acceptor in catalysis. Residue 186 to 187 (TH) participates in substrate binding.

This sequence belongs to the aspartate/glutamate racemases family.

It catalyses the reaction L-glutamate = D-glutamate. Its pathway is cell wall biogenesis; peptidoglycan biosynthesis. Provides the (R)-glutamate required for cell wall biosynthesis. The chain is Glutamate racemase from Vibrio vulnificus (strain CMCP6).